A 310-amino-acid polypeptide reads, in one-letter code: Malate dehydrogenase (310 aa).

Residues 7–13 (GAAGGIG) and D34 each bind NAD(+). Substrate is bound by residues R81 and R87. Residues N94 and 117–119 (ITN) each bind NAD(+). Substrate is bound by residues N119 and R153. H177 functions as the Proton acceptor in the catalytic mechanism. M227 is a binding site for NAD(+).

It belongs to the LDH/MDH superfamily. MDH type 1 family. Homodimer.

The catalysed reaction is (S)-malate + NAD(+) = oxaloacetate + NADH + H(+). In terms of biological role, catalyzes the reversible oxidation of malate to oxaloacetate. The protein is Malate dehydrogenase of Idiomarina loihiensis (strain ATCC BAA-735 / DSM 15497 / L2-TR).